A 333-amino-acid polypeptide reads, in one-letter code: E3 ubiquitin-protein ligase MIR1 (333 aa).

The RING-CH-type zinc-finger motif lies at 1–60 (MEDEDVPVCWICNEELGNERFRACGCTGELENVHRSCLSTWLTISRNTACQICGVVYNTR). The Cytoplasmic portion of the chain corresponds to 1-82 (MEDEDVPVCW…PRLTYQEGLE (82 aa)). Residues cysteine 9, cysteine 12, cysteine 24, cysteine 26, histidine 34, cysteine 37, cysteine 50, and cysteine 53 each contribute to the Zn(2+) site. The chain crosses the membrane as a helical span at residues 83–103 (LIVFIFIMTLGAAGLAAATWV). Topologically, residues 104–121 (WLYIVGGHDPEIDHVAAA) are extracellular. Residues 122–142 (AYYVFFVFYQLFVVFGLGAFF) form a helical membrane-spanning segment. Residues 143-333 (HMMRHVGRAY…SAVSSALMFH (191 aa)) are Cytoplasmic-facing. The disordered stretch occupies residues 187–257 (GDNQDEEGPA…GRDDNVEPTA (71 aa)). Residues 195-221 (PAGAAPGDQNGPAGAAPGDQDGPADGA) show a composition bias toward low complexity. Over residues 235–252 (AGYKEAGEPTHNDGRDDN) the composition is skewed to basic and acidic residues.

In terms of assembly, binds human MHC-I and CD1D.

It is found in the host cell membrane. The protein localises to the host endoplasmic reticulum. The catalysed reaction is [E2 ubiquitin-conjugating enzyme]-S-ubiquitinyl-L-cysteine + [acceptor protein]-L-cysteine = [E2 ubiquitin-conjugating enzyme]-L-cysteine + [acceptor protein]-S-ubiquitinyl-L-cysteine.. It participates in protein modification; protein ubiquitination. Functionally, membrane-bound E3 ubiquitin ligase expressed during late stages of lytic replication to mediate polyubiquitination of various host membrane proteins related to the immune response. Promotes ubiquitination and subsequent degradation of host MHC-I and CD1D molecules, DC-SIGN and DC-SIGNR, presumably to prevent lysis of infected cells by cytotoxic T-lymphocytes. Binds target molecules through transmembrane interaction. E3 ubiquitin-protein ligases accept ubiquitin from specific E2 ubiquitin-conjugating enzymes, and then transfer it to target protein. The result of this ubiquitination is the enhancement of the endocytosis of the target chain and the delivery to the lysosome, where it is proteolytically destroyed. Induces ubiquitination not only on lysines, but also on cysteine residues. The chain is E3 ubiquitin-protein ligase MIR1 (K3) from Human herpesvirus 8 type P (isolate GK18) (HHV-8).